Consider the following 202-residue polypeptide: Small ribosomal subunit protein uS4 (202 aa).

A disordered region spans residues 22–43 (TRKSARRAYPPGQHGQNRRKRS). The 63-residue stretch at 90-152 (MRLDNTVFRL…EKSKEMVKTN (63 aa)) folds into the S4 RNA-binding domain.

Belongs to the universal ribosomal protein uS4 family. In terms of assembly, part of the 30S ribosomal subunit. Contacts protein S5. The interaction surface between S4 and S5 is involved in control of translational fidelity.

In terms of biological role, one of the primary rRNA binding proteins, it binds directly to 16S rRNA where it nucleates assembly of the body of the 30S subunit. Its function is as follows. With S5 and S12 plays an important role in translational accuracy. The chain is Small ribosomal subunit protein uS4 from Trichodesmium erythraeum (strain IMS101).